Here is a 289-residue protein sequence, read N- to C-terminus: ATP synthase gamma chain (289 aa).

Belongs to the ATPase gamma chain family. As to quaternary structure, F-type ATPases have 2 components, CF(1) - the catalytic core - and CF(0) - the membrane proton channel. CF(1) has five subunits: alpha(3), beta(3), gamma(1), delta(1), epsilon(1). CF(0) has three main subunits: a, b and c.

Its subcellular location is the cell inner membrane. Its function is as follows. Produces ATP from ADP in the presence of a proton gradient across the membrane. The gamma chain is believed to be important in regulating ATPase activity and the flow of protons through the CF(0) complex. This chain is ATP synthase gamma chain, found in Haemophilus influenzae (strain PittEE).